Here is a 2715-residue protein sequence, read N- to C-terminus: Histone-lysine N-methyltransferase 2B (2715 aa).

The span at 1-11 (MAAAAGGGSCP) shows a compositional bias: gly residues. Disordered regions lie at residues 1–65 (MAAA…GEDT), 81–302 (RRLW…GGLP), 320–518 (SLGL…PKST), and 532–771 (VSAR…QMPP). N-acetylalanine is present on A2. Low complexity predominate over residues 12-24 (GPGSARGRFPGRP). A Menin-binding motif (MBM) motif is present at residues 17–36 (RGRFPGRPRGAGGGGGRGGR). Composition is skewed to gly residues over residues 25–38 (RGAGGGGGRGGRGN) and 49–60 (RGGGATGPGGAE). Positions 37–44 (GNGAERVR) form a DNA-binding region, a.T hook 1. The span at 109-123 (PEEESSDGESDEEEF) shows a compositional bias: acidic residues. The a.T hook 2 DNA-binding region spans 110–117 (EEESSDGE). A phosphoserine mark is found at S113, S114, and S118. Positions 144 to 158 (QRGRAPRGRGRKHKT) are enriched in basic residues. Over residues 160–176 (PLPPPRLADVAPTPPKT) the composition is skewed to pro residues. Residues 199 to 208 (RAQAPQAPRS) show a composition bias toward low complexity. S351 is modified (phosphoserine). The a.T hook 3 DNA-binding region spans 357-365 (QEQKLDDEE). Over residues 361–374 (LDDEEEEKKEEEEK) the composition is skewed to acidic residues. The span at 375 to 387 (DKEGEEKEERAVA) shows a compositional bias: basic and acidic residues. The span at 401–449 (LPPPPLTPPAPSPPPPLPPPSTSPPPPLCPPPPPPVSPPPLPSPPPPPA) shows a compositional bias: pro residues. The segment covering 545 to 556 (RFMDEDPPKPPK) has biased composition (basic and acidic residues). The span at 568-596 (TTSPPVPQEPAPVPSPPRAPTPPSTPVPL) shows a compositional bias: pro residues. The span at 597–608 (PEKRRSILREPT) shows a compositional bias: basic and acidic residues. The segment covering 618–637 (LPPPPPAPPPPPAPSPPPAP) has biased composition (pro residues). Low complexity predominate over residues 731 to 751 (PQTQAQLLQPLQALQTQLLPQ). A compositionally biased stretch (pro residues) spans 752-769 (ALPPPQPQLQPPPSPQQM). A Glycyl lysine isopeptide (Lys-Gly) (interchain with G-Cter in SUMO2) cross-link involves residue K805. 2 disordered regions span residues 819-868 (PLSP…GPRI) and 894-959 (SALP…HHGK). A phosphoserine mark is found at S821, S844, and S861. Over residues 836–857 (ISDRGPVRSEDESVEAKRERPS) the composition is skewed to basic and acidic residues. The span at 907-917 (EDTSSASETES) shows a compositional bias: low complexity. S936 carries the post-translational modification Phosphoserine. Residues 948-959 (TPRRSLPSHHGK) show a composition bias toward basic residues. A CXXC-type zinc finger spans residues 959–1006 (KKMRMARCGHCRGCLRVQDCGSCVNCLDKPKFGGPNTKKQCCVYRKCD). Residues C966, C969, C972, C978, C981, C984, C1000, and C1005 each contribute to the Zn(2+) site. The tract at residues 1027 to 1132 (LLPWDSDESP…RPRKPTLQPV (106 aa)) is disordered. 4 positions are modified to phosphoserine: S1032, S1035, S1092, and S1095. A Glycyl lysine isopeptide (Lys-Gly) (interchain with G-Cter in SUMO2) cross-link involves residue K1136. The segment at 1146 to 1166 (LAPGPFASFPNGWTGKQKSPD) is disordered. 3 PHD-type zinc fingers span residues 1201–1252 (PMVC…CKFC), 1249–1303 (CKFC…CVRC), and 1335–1396 (GNYC…CAGA). Positions 1404-1504 (ALSGALQGGL…GLLLKLLESA (101 aa)) constitute a Bromo domain. A disordered region spans residues 1545 to 1567 (QQEPETPESGQPPGDPSAAFQGK). Residues 1578–1618 (PRQCALCLKYGDADSKEAGRLLYIGQNEWTHVNCAIWSAEV) form a C2HC pre-PHD-type zinc finger. A PHD-type 4 zinc finger spans residues 1639-1686 (MRCELCLKPGATVGCCLSSCLSNFHFMCARASYCIFQDDKKVFCQKHT). The FYR N-terminal domain occupies 1727–1783 (AINVLIGSIRIDSLGTLSDLSDCEGRLFPIGYQCSRLYWSTVDARRRCWYRCRILEY). Disordered regions lie at residues 1806 to 1978 (HSPA…PDFE), 2008 to 2093 (VAAG…VVRA), 2118 to 2162 (LKNL…PTRT), and 2280 to 2412 (RVST…RTGP). A compositionally biased stretch (low complexity) spans 1876-1894 (PLGGVSFGPLPSPGSPSSL). A phosphoserine mark is found at S1930 and S1936. Positions 1960 to 1972 (PPGPAPSPPPPED) are enriched in pro residues. Residues 2062–2072 (DGVDDGTDSEA) are compositionally biased toward acidic residues. T2068 and T2083 each carry phosphothreonine. Residues 2144-2153 (NGSQPSQGLT) show a composition bias toward polar residues. A phosphoserine mark is found at S2288 and S2348. Over residues 2342–2351 (EPAGEESPGP) the composition is skewed to low complexity. The span at 2359-2373 (LPLPEDGPPQVPDGP) shows a compositional bias: pro residues. Residues 2411-2492 (GPHLRFEISS…QRCQHYKFRY (82 aa)) enclose the FYR C-terminal domain. Residues 2508-2513 (GAARAE) carry the WDR5 interaction motif (WIN) motif. The 117-residue stretch at 2575-2691 (EAVGVYRSAI…RGEELTYDYK (117 aa)) folds into the SET domain. Residues H2585, R2587, Y2629, and 2652–2653 (NH) contribute to the S-adenosyl-L-methionine site. Zn(2+) is bound by residues C2655 and C2703. One can recognise a Post-SET domain in the interval 2699–2715 (NKLPCNCGAKRCRRFLN). N2704 contacts S-adenosyl-L-methionine. C2705 and C2710 together coordinate Zn(2+).

Belongs to the class V-like SAM-binding methyltransferase superfamily. Histone-lysine methyltransferase family. TRX/MLL subfamily. In terms of assembly, component of the menin-associated histone methyltransferase complex, at least composed of KMT2B/MLL4, ASH2L, RBBP5, WDR5, DPY30, MEN1; the complex interacts with POLR2A and POLR2B via MEN1. Interacts with NFE2. Interacts with KDM6B. Interacts (via WIN motif) with WDR5. Interacts (via MBM motif) with MEN1. Forms a core complex with the evolutionary conserved subcomplex WRAD composed of WDR5, RBBP5, ASH2L/ASH2 and DPY30 subunits; WRAD differentially stimulates the methyltransferase activity. In terms of tissue distribution, widely expressed. Highest levels in testis. Also found in brain with higher expression in the cerebellum than in any other region, bone marrow, heart, muscle, kidney, placenta, spleen, thymus, prostate, ovary, intestine, colon, peripheral blood lymphocytes and pancreas. Often amplified in pancreatic carcinomas.

It is found in the nucleus. It catalyses the reaction L-lysyl(4)-[histone H3] + S-adenosyl-L-methionine = N(6)-methyl-L-lysyl(4)-[histone H3] + S-adenosyl-L-homocysteine + H(+). The catalysed reaction is N(6)-methyl-L-lysyl(4)-[histone H3] + S-adenosyl-L-methionine = N(6),N(6)-dimethyl-L-lysyl(4)-[histone H3] + S-adenosyl-L-homocysteine + H(+). Its function is as follows. Histone methyltransferase that catalyzes methyl group transfer from S-adenosyl-L-methionine to the epsilon-amino group of 'Lys-4' of histone H3 (H3K4) via a non-processive mechanism. Part of chromatin remodeling machinery predominantly forms H3K4me1 and H3K4me2 methylation marks at active chromatin sites where transcription and DNA repair take place. Likely plays a redundant role with KMT2C in enriching H3K4me1 marks on primed and active enhancer elements. Plays a central role in beta-globin locus transcription regulation by being recruited by NFE2. Plays an important role in controlling bulk H3K4me during oocyte growth and preimplantation development. Required during the transcriptionally active period of oocyte growth for the establishment and/or maintenance of bulk H3K4 trimethylation (H3K4me3), global transcriptional silencing that preceeds resumption of meiosis, oocyte survival and normal zygotic genome activation. The protein is Histone-lysine N-methyltransferase 2B (KMT2B) of Homo sapiens (Human).